Reading from the N-terminus, the 330-residue chain is Phosphate acyltransferase (330 aa).

It belongs to the PlsX family. Homodimer. Probably interacts with PlsY.

The protein localises to the cytoplasm. The enzyme catalyses a fatty acyl-[ACP] + phosphate = an acyl phosphate + holo-[ACP]. It functions in the pathway lipid metabolism; phospholipid metabolism. Its function is as follows. Catalyzes the reversible formation of acyl-phosphate (acyl-PO(4)) from acyl-[acyl-carrier-protein] (acyl-ACP). This enzyme utilizes acyl-ACP as fatty acyl donor, but not acyl-CoA. The protein is Phosphate acyltransferase of Campylobacter hominis (strain ATCC BAA-381 / DSM 21671 / CCUG 45161 / LMG 19568 / NCTC 13146 / CH001A).